Reading from the N-terminus, the 417-residue chain is NADH-quinone oxidoreductase subunit D (417 aa).

This sequence belongs to the complex I 49 kDa subunit family. In terms of assembly, NDH-1 is composed of 14 different subunits. Subunits NuoB, C, D, E, F, and G constitute the peripheral sector of the complex.

It localises to the cell inner membrane. The catalysed reaction is a quinone + NADH + 5 H(+)(in) = a quinol + NAD(+) + 4 H(+)(out). Its function is as follows. NDH-1 shuttles electrons from NADH, via FMN and iron-sulfur (Fe-S) centers, to quinones in the respiratory chain. The immediate electron acceptor for the enzyme in this species is believed to be ubiquinone. Couples the redox reaction to proton translocation (for every two electrons transferred, four hydrogen ions are translocated across the cytoplasmic membrane), and thus conserves the redox energy in a proton gradient. The chain is NADH-quinone oxidoreductase subunit D from Paracidovorax citrulli (strain AAC00-1) (Acidovorax citrulli).